The sequence spans 113 residues: UPF0482 protein YnfB (113 aa).

The N-terminal stretch at 1–28 (MNILSGKLPFLLGAVFAGSVVLATSVQA) is a signal peptide.

The protein belongs to the UPF0482 family.

This is UPF0482 protein YnfB from Escherichia fergusonii (strain ATCC 35469 / DSM 13698 / CCUG 18766 / IAM 14443 / JCM 21226 / LMG 7866 / NBRC 102419 / NCTC 12128 / CDC 0568-73).